The following is a 1838-amino-acid chain: Lysine-specific demethylase 5 (1838 aa).

The tract at residues 1 to 150 (MSAKTEADNT…SSNKFDQGKN (150 aa)) is disordered. A compositionally biased stretch (gly residues) spans 15–31 (SGGGGVGSGTSSGGGAS). A compositionally biased stretch (low complexity) spans 45–56 (RNSTGNGTNSGS). Residues 136-145 (HTQPHSSNKF) are compositionally biased toward polar residues. The region spanning 161–202 (CPVFRPTTEEFKNPLAYISKIRSIAEKCGIAKILPPATWSPP) is the JmjN domain. The region spanning 226 to 316 (TRVKLNFLDQ…ILHPFEVYTS (91 aa)) is the ARID domain. Low complexity predominate over residues 321 to 333 (GPTPTSSGSGSTP). Disordered stretches follow at residues 321 to 380 (GPTP…GLSG) and 416 to 437 (GSPL…KGGE). T323 is modified (phosphothreonine). 3 stretches are compositionally biased toward polar residues: residues 351 to 361 (TRQQIAPPNET), 369 to 380 (FGNSNASCGLSG), and 416 to 430 (GSPL…TRGA). A PHD-type 1 zinc finger spans residues 448–498 (KYICHICNRGDVEESMLLCDGCDDSYHTFCLLPPLTSIPKGEWLCPRCVVE). Residues 591–757 (EYAESSWNLN…MGRECVNHYS (167 aa)) enclose the JmjC domain. The Fe cation site is built by H637, D640, and H725. Residues 960 to 1049 (VRTRSDHNQE…LRIELQQLDL (90 aa)) are a coiled coil. The PHD-type 2 zinc finger occupies 1293-1354 (DMFCLCKSEF…KWLCPSCVRS (62 aa)). The tract at residues 1401-1462 (SSPDVSAAQE…SDADDDDDED (62 aa)) is disordered. The segment covering 1407 to 1417 (AAQEAIMAQQQ) has biased composition (low complexity). Residues S1422 and S1433 each carry the phosphoserine modification. The segment covering 1453-1462 (SDADDDDDED) has biased composition (acidic residues). S1474 bears the Phosphoserine mark. The interval 1548 to 1751 (YMQRQRQQHT…QRSQQAAQED (204 aa)) is disordered. 5 stretches are compositionally biased toward low complexity: residues 1576-1595 (NSPN…SNSG), 1624-1650 (GKKG…PGAD), 1658-1667 (ANGGNTNSST), 1674-1683 (SATTTPTPGS), and 1692-1736 (STTA…ATGG). Phosphoserine is present on residues S1635 and S1640. The PHD-type 3 zinc finger occupies 1753 to 1808 (EEECRAENCHKPTGREVDWVQCDGGCNEWFHMYCVGLNRSQIKPDDDYICIRCTKT). The tract at residues 1814-1838 (QGSGHSMSVASTTTPGKQRAVQSAR) is disordered.

It belongs to the JARID1 histone demethylase family. In terms of assembly, interacts with Myc. Part of a complex containing Lid, Myc and Ash2. Fe(2+) is required as a cofactor.

The protein localises to the nucleus. It carries out the reaction N(6),N(6),N(6)-trimethyl-L-lysyl(4)-[histone H3] + 3 2-oxoglutarate + 3 O2 = L-lysyl(4)-[histone H3] + 3 formaldehyde + 3 succinate + 3 CO2. With respect to regulation, inhibited by Myc. Histone demethylase that specifically demethylates 'Lys-4' of histone H3, thereby playing a central role in histone code. Does not demethylate histone H3 'Lys-9', H3 'Lys-27', H3 'Lys-36', H3 'Lys-79' or H4 'Lys-20'. Specifically demethylates trimethylated H3 'Lys-4'. Required for the correct regulation of homeotic genes during development. Plays a role in the regulation of the circadian rhythm and in maintaining the normal periodicity of the circadian clock. Regulates the expression of clock-controlled genes including tim, per and cry. This is Lysine-specific demethylase 5 from Drosophila melanogaster (Fruit fly).